Consider the following 324-residue polypeptide: NADH-ubiquinone oxidoreductase chain 1 (324 aa).

A run of 8 helical transmembrane segments spans residues Met10–Val30, Phe76–Leu96, Leu107–Gly127, Val143–Leu163, Pro178–Ala198, Leu229–Phe249, Glu260–Ile280, and Phe300–Gly320.

The protein belongs to the complex I subunit 1 family.

It localises to the mitochondrion inner membrane. The catalysed reaction is a ubiquinone + NADH + 5 H(+)(in) = a ubiquinol + NAD(+) + 4 H(+)(out). Its function is as follows. Core subunit of the mitochondrial membrane respiratory chain NADH dehydrogenase (Complex I) that is believed to belong to the minimal assembly required for catalysis. Complex I functions in the transfer of electrons from NADH to the respiratory chain. The immediate electron acceptor for the enzyme is believed to be ubiquinone. In Coturnix japonica (Japanese quail), this protein is NADH-ubiquinone oxidoreductase chain 1 (MT-ND1).